We begin with the raw amino-acid sequence, 544 residues long: Chaperonin GroEL (544 aa).

ATP contacts are provided by residues 30–33, Lys51, 87–91, Gly415, 481–483, and Asp497; these read TLGP, DGTTT, and DAL.

Belongs to the chaperonin (HSP60) family. In terms of assembly, forms a cylinder of 14 subunits composed of two heptameric rings stacked back-to-back. Interacts with the co-chaperonin GroES.

It localises to the cytoplasm. It catalyses the reaction ATP + H2O + a folded polypeptide = ADP + phosphate + an unfolded polypeptide.. In terms of biological role, together with its co-chaperonin GroES, plays an essential role in assisting protein folding. The GroEL-GroES system forms a nano-cage that allows encapsulation of the non-native substrate proteins and provides a physical environment optimized to promote and accelerate protein folding. This chain is Chaperonin GroEL, found in Chlamydia felis (strain Fe/C-56) (Chlamydophila felis).